The following is a 481-amino-acid chain: Protein nucleotidyltransferase YdiU (481 aa).

Residues Gly-87, Gly-89, Arg-90, Lys-110, Asp-122, Gly-123, Arg-173, and Arg-180 each contribute to the ATP site. The active-site Proton acceptor is the Asp-249. Residues Asn-250 and Asp-259 each contribute to the Mg(2+) site. Residue Asp-259 coordinates ATP.

It belongs to the SELO family. Mg(2+) serves as cofactor. Mn(2+) is required as a cofactor.

It catalyses the reaction L-seryl-[protein] + ATP = 3-O-(5'-adenylyl)-L-seryl-[protein] + diphosphate. It carries out the reaction L-threonyl-[protein] + ATP = 3-O-(5'-adenylyl)-L-threonyl-[protein] + diphosphate. The catalysed reaction is L-tyrosyl-[protein] + ATP = O-(5'-adenylyl)-L-tyrosyl-[protein] + diphosphate. The enzyme catalyses L-histidyl-[protein] + UTP = N(tele)-(5'-uridylyl)-L-histidyl-[protein] + diphosphate. It catalyses the reaction L-seryl-[protein] + UTP = O-(5'-uridylyl)-L-seryl-[protein] + diphosphate. It carries out the reaction L-tyrosyl-[protein] + UTP = O-(5'-uridylyl)-L-tyrosyl-[protein] + diphosphate. Its function is as follows. Nucleotidyltransferase involved in the post-translational modification of proteins. It can catalyze the addition of adenosine monophosphate (AMP) or uridine monophosphate (UMP) to a protein, resulting in modifications known as AMPylation and UMPylation. The protein is Protein nucleotidyltransferase YdiU of Mycobacterium sp. (strain KMS).